The primary structure comprises 172 residues: Small ribosomal subunit protein uS5c (172 aa).

The 64-residue stretch at 15 to 78 folds into the S5 DRBM domain; the sequence is WEEKVVQVKR…TDAKKHIINV (64 aa).

It belongs to the universal ribosomal protein uS5 family. As to quaternary structure, part of the 30S ribosomal subunit. Contacts protein S4.

It localises to the plastid. The protein resides in the chloroplast. In terms of biological role, with S4 and S12 plays an important role in translational accuracy. This Gracilaria tenuistipitata var. liui (Red alga) protein is Small ribosomal subunit protein uS5c (rps5).